The chain runs to 398 residues: Acetate kinase 1 (398 aa).

Position 9 (Asn9) interacts with Mg(2+). An ATP-binding site is contributed by Lys16. Arg89 is a binding site for substrate. Residue Asp146 is the Proton donor/acceptor of the active site. ATP-binding positions include 206-210, 281-283, and 329-333; these read HLGNG, DCR, and GIGEN. Residue Glu384 coordinates Mg(2+).

Belongs to the acetokinase family. In terms of assembly, homodimer. It depends on Mg(2+) as a cofactor. Requires Mn(2+) as cofactor.

It localises to the cytoplasm. It catalyses the reaction acetate + ATP = acetyl phosphate + ADP. Its pathway is metabolic intermediate biosynthesis; acetyl-CoA biosynthesis; acetyl-CoA from acetate: step 1/2. In terms of biological role, catalyzes the formation of acetyl phosphate from acetate and ATP. Can also catalyze the reverse reaction. The chain is Acetate kinase 1 from Vibrio parahaemolyticus serotype O3:K6 (strain RIMD 2210633).